Here is a 244-residue protein sequence, read N- to C-terminus: MRSLILAVQFLTRLPTPQLRTFDPAWLAGAIRWFAVVGLLVGALVAALGWLGAWLDPWLAALLMLVTWVWVTGGLHLDGLGDLADGLGAAHRSPERFLAVLKDPHTGSFAVITLALQLLAKLVLLMLAVRHGVGWSALVLLPAWARLGAVWWTTLPPLSAGGHAERFAWRHDWPAFWLSWLLLAALSAWLAPVLLLAPVLWWGWRRFLWRRLGGMSGDCLGAGIELTETGLLLLAVVATRLPLA.

The next 5 membrane-spanning stretches (helical) occupy residues 33 to 53 (WFAV…WLGA), 57 to 77 (PWLA…GLHL), 109 to 129 (FAVI…MLAV), 132 to 152 (GVGW…AVWW), and 176 to 196 (FWLS…VLLL).

Belongs to the CobS family. It depends on Mg(2+) as a cofactor.

It is found in the cell inner membrane. The catalysed reaction is alpha-ribazole + adenosylcob(III)inamide-GDP = adenosylcob(III)alamin + GMP + H(+). It carries out the reaction alpha-ribazole 5'-phosphate + adenosylcob(III)inamide-GDP = adenosylcob(III)alamin 5'-phosphate + GMP + H(+). It functions in the pathway cofactor biosynthesis; adenosylcobalamin biosynthesis; adenosylcobalamin from cob(II)yrinate a,c-diamide: step 7/7. Joins adenosylcobinamide-GDP and alpha-ribazole to generate adenosylcobalamin (Ado-cobalamin). Also synthesizes adenosylcobalamin 5'-phosphate from adenosylcobinamide-GDP and alpha-ribazole 5'-phosphate. The sequence is that of Adenosylcobinamide-GDP ribazoletransferase from Laribacter hongkongensis (strain HLHK9).